Reading from the N-terminus, the 227-residue chain is Probable cytokinin riboside 5'-monophosphate phosphoribohydrolase LOGL9 (227 aa).

Residues 1 to 15 are compositionally biased toward polar residues; it reads MYISSPHTSHFTSID. The interval 1-26 is disordered; sequence MYISSPHTSHFTSIDRSPAVVSESDR. Substrate-binding positions include Glu117, 135 to 136, and 152 to 158; these read RK and GYGTLEE.

This sequence belongs to the LOG family. As to expression, expressed in roots, leaves and stems.

It catalyses the reaction N(6)-(dimethylallyl)adenosine 5'-phosphate + H2O = N(6)-dimethylallyladenine + D-ribose 5-phosphate. The catalysed reaction is 9-ribosyl-trans-zeatin 5'-phosphate + H2O = trans-zeatin + D-ribose 5-phosphate. In terms of biological role, cytokinin-activating enzyme working in the direct activation pathway. Phosphoribohydrolase that converts inactive cytokinin nucleotides to the biologically active free-base forms. This chain is Probable cytokinin riboside 5'-monophosphate phosphoribohydrolase LOGL9 (LOGL9), found in Oryza sativa subsp. japonica (Rice).